Consider the following 589-residue polypeptide: CTP synthase (589 aa).

The interval 1–281 (MPQSRTHSRT…DAYVVRQLGL (281 aa)) is amidoligase domain. A CTP-binding site is contributed by Ser23. Ser23 contributes to the UTP binding site. Residues 24–29 (SLGKGL) and Asp81 each bind ATP. 2 residues coordinate Mg(2+): Asp81 and Glu155. Residues 162–164 (DIE), 202–207 (KTKPTQ), and Lys238 each bind CTP. Residues 202-207 (KTKPTQ) and Lys238 each bind UTP. One can recognise a Glutamine amidotransferase type-1 domain in the interval 306-554 (RIALVGKYVD…VDAALRHKLE (249 aa)). Gly369 provides a ligand contact to L-glutamine. Cys396 functions as the Nucleophile; for glutamine hydrolysis in the catalytic mechanism. Residues 397-400 (LGLQ), Glu419, and Arg480 contribute to the L-glutamine site. Active-site residues include His527 and Glu529. A disordered region spans residues 562–589 (HGEERAAADDEIAESADRDEVASVDSAG).

The protein belongs to the CTP synthase family. In terms of assembly, homotetramer.

It catalyses the reaction UTP + L-glutamine + ATP + H2O = CTP + L-glutamate + ADP + phosphate + 2 H(+). It carries out the reaction L-glutamine + H2O = L-glutamate + NH4(+). The catalysed reaction is UTP + NH4(+) + ATP = CTP + ADP + phosphate + 2 H(+). Its pathway is pyrimidine metabolism; CTP biosynthesis via de novo pathway; CTP from UDP: step 2/2. With respect to regulation, allosterically activated by GTP, when glutamine is the substrate; GTP has no effect on the reaction when ammonia is the substrate. The allosteric effector GTP functions by stabilizing the protein conformation that binds the tetrahedral intermediate(s) formed during glutamine hydrolysis. Inhibited by the product CTP, via allosteric rather than competitive inhibition. Functionally, catalyzes the ATP-dependent amination of UTP to CTP with either L-glutamine or ammonia as the source of nitrogen. Regulates intracellular CTP levels through interactions with the four ribonucleotide triphosphates. This chain is CTP synthase, found in Rhodococcus opacus (strain B4).